Here is a 592-residue protein sequence, read N- to C-terminus: Bifunctional purine biosynthesis protein ADE17 (592 aa).

Residues 1–147 (MANYTKTAIL…KNHARVTILS (147 aa)) enclose the MGS-like domain. Residues 35–38 (SGGT), 65–68 (RVKT), 102–103 (CN), and 126–127 (DI) contribute to the IMP site. The active-site Proton donor/acceptor; for FAICAR cyclization activity is Lys-138. Residues 206–207 (RY), His-267, Gly-315, Asp-338, Asn-430, and Arg-450 each bind 5-amino-1-(5-phospho-beta-D-ribosyl)imidazole-4-carboxamide. The active-site Proton acceptor; for AICAR formyltransferase activity is the His-267. A (6R)-10-formyltetrahydrofolate-binding site is contributed by Ile-451. Phe-541 is a 5-amino-1-(5-phospho-beta-D-ribosyl)imidazole-4-carboxamide binding site. Residues Asp-546 and 565 to 566 (SV) contribute to the (6R)-10-formyltetrahydrofolate site. 5-amino-1-(5-phospho-beta-D-ribosyl)imidazole-4-carboxamide is bound at residue Arg-588.

The protein belongs to the PurH family. As to quaternary structure, homodimer.

It localises to the cytoplasm. The protein localises to the cytosol. It carries out the reaction (6R)-10-formyltetrahydrofolate + 5-amino-1-(5-phospho-beta-D-ribosyl)imidazole-4-carboxamide = 5-formamido-1-(5-phospho-D-ribosyl)imidazole-4-carboxamide + (6S)-5,6,7,8-tetrahydrofolate. The catalysed reaction is IMP + H2O = 5-formamido-1-(5-phospho-D-ribosyl)imidazole-4-carboxamide. It functions in the pathway purine metabolism; IMP biosynthesis via de novo pathway; 5-formamido-1-(5-phospho-D-ribosyl)imidazole-4-carboxamide from 5-amino-1-(5-phospho-D-ribosyl)imidazole-4-carboxamide (10-formyl THF route): step 1/1. It participates in purine metabolism; IMP biosynthesis via de novo pathway; IMP from 5-formamido-1-(5-phospho-D-ribosyl)imidazole-4-carboxamide: step 1/1. Bifunctional enzyme that catalyzes the last two steps of purine biosynthesis. Acts as a transformylase that incorporates a formyl group to the AMP analog AICAR (5-amino-1-(5-phospho-beta-D-ribosyl)imidazole-4-carboxamide) to produce the intermediate formyl-AICAR (FAICAR). Also catalyzes the cyclization of FAICAR to IMP. This chain is Bifunctional purine biosynthesis protein ADE17, found in Saccharomyces cerevisiae (strain ATCC 204508 / S288c) (Baker's yeast).